The chain runs to 116 residues: T-cell leukemia/lymphoma protein 1A (116 aa).

This sequence belongs to the TCL1 family. As to quaternary structure, homodimer. Interacts with AKT1, AKT2 and AKT3 (via PH domain). Interacts with PNPT1; the interaction has no effect on PNPT1 exonuclease activity.

The protein localises to the cytoplasm. It localises to the nucleus. It is found in the microsome. Its subcellular location is the endoplasmic reticulum. Enhances the phosphorylation and activation of AKT1 and AKT2. Enhances cell proliferation, stabilizes mitochondrial membrane potential and promotes cell survival. The sequence is that of T-cell leukemia/lymphoma protein 1A (Tcl1a) from Mus musculus (Mouse).